A 201-amino-acid chain; its full sequence is Putative pseudouridine methyltransferase (201 aa).

S-adenosyl-L-methionine is bound by residues methionine 132 and cysteine 186.

Belongs to the methyltransferase superfamily. TrmY family.

The protein localises to the cytoplasm. The chain is Putative pseudouridine methyltransferase from Vibrio cholerae serotype O1 (strain ATCC 39315 / El Tor Inaba N16961).